The following is a 220-amino-acid chain: Phosphatidylserine decarboxylase proenzyme (220 aa).

The Schiff-base intermediate with substrate; via pyruvic acid role is filled by serine 188. Serine 188 is subject to Pyruvic acid (Ser); by autocatalysis.

This sequence belongs to the phosphatidylserine decarboxylase family. PSD-A subfamily. As to quaternary structure, heterodimer of a large membrane-associated beta subunit and a small pyruvoyl-containing alpha subunit. It depends on pyruvate as a cofactor. Post-translationally, is synthesized initially as an inactive proenzyme. Formation of the active enzyme involves a self-maturation process in which the active site pyruvoyl group is generated from an internal serine residue via an autocatalytic post-translational modification. Two non-identical subunits are generated from the proenzyme in this reaction, and the pyruvate is formed at the N-terminus of the alpha chain, which is derived from the carboxyl end of the proenzyme. The post-translation cleavage follows an unusual pathway, termed non-hydrolytic serinolysis, in which the side chain hydroxyl group of the serine supplies its oxygen atom to form the C-terminus of the beta chain, while the remainder of the serine residue undergoes an oxidative deamination to produce ammonia and the pyruvoyl prosthetic group on the alpha chain.

It localises to the cell membrane. The catalysed reaction is a 1,2-diacyl-sn-glycero-3-phospho-L-serine + H(+) = a 1,2-diacyl-sn-glycero-3-phosphoethanolamine + CO2. The protein operates within phospholipid metabolism; phosphatidylethanolamine biosynthesis; phosphatidylethanolamine from CDP-diacylglycerol: step 2/2. In terms of biological role, catalyzes the formation of phosphatidylethanolamine (PtdEtn) from phosphatidylserine (PtdSer). This chain is Phosphatidylserine decarboxylase proenzyme, found in Cytophaga hutchinsonii (strain ATCC 33406 / DSM 1761 / CIP 103989 / NBRC 15051 / NCIMB 9469 / D465).